Here is a 292-residue protein sequence, read N- to C-terminus: Shikimate dehydrogenase (NADP(+)) (292 aa).

Residues 22-24 and serine 69 each bind shikimate; that span reads SLS. Lysine 73 (proton acceptor) is an active-site residue. Shikimate-binding residues include asparagine 94 and aspartate 111. NADP(+) is bound by residues 135 to 139 and isoleucine 236; that span reads GVGGA. Residue tyrosine 238 participates in shikimate binding. Glycine 260 contacts NADP(+).

Belongs to the shikimate dehydrogenase family. As to quaternary structure, homodimer.

It catalyses the reaction shikimate + NADP(+) = 3-dehydroshikimate + NADPH + H(+). It functions in the pathway metabolic intermediate biosynthesis; chorismate biosynthesis; chorismate from D-erythrose 4-phosphate and phosphoenolpyruvate: step 4/7. Involved in the biosynthesis of the chorismate, which leads to the biosynthesis of aromatic amino acids. Catalyzes the reversible NADPH linked reduction of 3-dehydroshikimate (DHSA) to yield shikimate (SA). The protein is Shikimate dehydrogenase (NADP(+)) of Streptococcus pyogenes serotype M28 (strain MGAS6180).